Reading from the N-terminus, the 132-residue chain is Small ribosomal subunit protein uS8 (132 aa).

It belongs to the universal ribosomal protein uS8 family. Part of the 30S ribosomal subunit. Contacts proteins S5 and S12.

One of the primary rRNA binding proteins, it binds directly to 16S rRNA central domain where it helps coordinate assembly of the platform of the 30S subunit. The sequence is that of Small ribosomal subunit protein uS8 from Corynebacterium glutamicum (strain R).